The sequence spans 597 residues: Elongation factor 4 (597 aa).

A tr-type G domain is found at 2 to 184; sequence KHIRNFSIIA…NIVSAIPAPE (183 aa). GTP contacts are provided by residues 14–19 and 131–134; these read DHGKST and NKID.

It belongs to the TRAFAC class translation factor GTPase superfamily. Classic translation factor GTPase family. LepA subfamily.

It is found in the cell inner membrane. It catalyses the reaction GTP + H2O = GDP + phosphate + H(+). Required for accurate and efficient protein synthesis under certain stress conditions. May act as a fidelity factor of the translation reaction, by catalyzing a one-codon backward translocation of tRNAs on improperly translocated ribosomes. Back-translocation proceeds from a post-translocation (POST) complex to a pre-translocation (PRE) complex, thus giving elongation factor G a second chance to translocate the tRNAs correctly. Binds to ribosomes in a GTP-dependent manner. The sequence is that of Elongation factor 4 from Vibrio parahaemolyticus serotype O3:K6 (strain RIMD 2210633).